A 274-amino-acid chain; its full sequence is Kit ligand (274 aa).

A signal peptide spans 1 to 25; the sequence is MKKTQTWIVTCIYLQLLLFNPLVKT. Residues 26–215 are Extracellular-facing; that stretch reads KGLCRNRVTD…TNPIEDSSIQ (190 aa). 2 cysteine pairs are disulfide-bonded: C29-C114 and C68-C164. N-linked (GlcNAc...) asparagine glycans are attached at residues N90, N97, N145, and N196. Residues 216-238 form a helical membrane-spanning segment; the sequence is WAVMALPACFSLVIGFAFGAFYW. The Cytoplasmic portion of the chain corresponds to 239–274; the sequence is KKKQPNLTRTVENIQINEEDNEISMLQEKEREFQEV.

Belongs to the SCF family. In terms of assembly, homodimer, non-covalently linked. In terms of processing, a soluble form is produced by proteolytic processing of isoform 1 in the extracellular domain.

The protein resides in the cell membrane. It localises to the secreted. The protein localises to the cytoplasm. It is found in the cytoskeleton. Its subcellular location is the cell projection. The protein resides in the lamellipodium. It localises to the filopodium. Stimulates the proliferation of mast cells. Able to augment the proliferation of both myeloid and lymphoid hematopoietic progenitors in bone marrow culture. Also mediates cell-cell adhesion. Acts synergistically with other cytokines, probably interleukins. This Felis catus (Cat) protein is Kit ligand (KITLG).